A 266-amino-acid polypeptide reads, in one-letter code: Interleukin-1 beta (266 aa).

Residues 1-113 (MATVPEPINE…ETSSDELLCD (113 aa)) constitute a propeptide that is removed on maturation.

The protein belongs to the IL-1 family. In terms of assembly, monomer. In its precursor form, weakly interacts with full-length MEFV; the mature cytokine does not interact at all. Interacts with integrins ITGAV:ITGBV and ITGA5:ITGB1; integrin-binding is required for IL1B signaling. Interacts with cargo receptor TMED10; the interaction is direct and is required for the secretion of IL1B mature form. Interacts with HSP90AB1; the interaction facilitates cargo translocation into the ERGIC. Interacts with HSP90B1; the interaction facilitates cargo translocation into the ERGIC.

Its subcellular location is the cytoplasm. It localises to the cytosol. The protein localises to the secreted. The protein resides in the lysosome. It is found in the extracellular exosome. In terms of biological role, potent pro-inflammatory cytokine. Initially discovered as the major endogenous pyrogen, induces prostaglandin synthesis, neutrophil influx and activation, T-cell activation and cytokine production, B-cell activation and antibody production, and fibroblast proliferation and collagen production. Promotes Th17 differentiation of T-cells. Synergizes with IL12/interleukin-12 to induce IFNG synthesis from T-helper 1 (Th1) cells. Plays a role in angiogenesis by inducing VEGF production synergistically with TNF and IL6. Involved in transduction of inflammation downstream of pyroptosis: its mature form is specifically released in the extracellular milieu by passing through the gasdermin-D (GSDMD) pore. The protein is Interleukin-1 beta (IL1B) of Capra hircus (Goat).